A 160-amino-acid chain; its full sequence is Ureidoglycolate lyase (160 aa).

This sequence belongs to the ureidoglycolate lyase family. Homodimer. It depends on Ni(2+) as a cofactor.

The catalysed reaction is (S)-ureidoglycolate = urea + glyoxylate. Its pathway is nitrogen metabolism; (S)-allantoin degradation. Catalyzes the catabolism of the allantoin degradation intermediate (S)-ureidoglycolate, generating urea and glyoxylate. Involved in the anaerobic utilization of allantoin as sole nitrogen source. Reinforces the induction of genes involved in the degradation of allantoin and glyoxylate by producing glyoxylate. The sequence is that of Ureidoglycolate lyase from Escherichia coli O139:H28 (strain E24377A / ETEC).